A 1061-amino-acid polypeptide reads, in one-letter code: MKETSPIPQPKTFGPLGNLPLIDKDKPTLSLIKLAEEQGPIFQIHTPAGTTIVVSGHELVKEVCDEERFDKSIEGALEKVRAFSGDGLFTSWTHEPNWRKAHNILMPTFSQRAMKDYHEKMVDIAVQLIQKWARLNPNEAVDVPGDMTRLTLDTIGLCGFNYRFNSYYRETPHPFINSMVRALDEAMHQMQRLDVQDKLMVRTKRQFRYDIQTMFSLVDSIIAERRANGDQDEKDLLARMLNVEDPETGEKLDDENIRFQIITFLIAGHETTSGLLSFATYFLLKHPDKLKKAYEEVDRVLTDAAPTYKQVLELTYIRMILNESLRLWPTAPAFSLYPKEDTVIGGKFPITTNDRISVLIPQLHRDRDAWGKDAEEFRPERFEHQDQVPHHAYKPFGNGQRACIGMQFALHEATLVLGMILKYFTLIDHENYELDIKQTLTLKPGDFHISVQSRHQEAIHADVQAAEKAAPDEQKEKTEAKGASVIGLNNRPLLVLYGSDTGTAEGVARELADTASLHGVRTKTAPLNDRIGKLPKEGAVVIVTSSYNGKPPSNAGQFVQWLQEIKPGELEGVHYAVFGCGDHNWASTYQYVPRFIDEQLAEKGATRFSARGEGDVSGDFEGQLDEWKKSMWADAIKAFGLELNENADKERSTLSLQFVRGLGESPLARSYEASHASIAENRELQSADSDRSTRHIEIALPPDVEYQEGDHLGVLPKNSQTNVSRILHRFGLKGTDQVTLSASGRSAGHLPLGRPVSLHDLLSYSVEVQEAATRAQIRELASFTVCPPHRRELEELSAEGVYQEQILKKRISMLDLLEKYEACDMPFERFLELLRPLKPRYYSISSSPRVNPRQASITVGVVRGPAWSGRGEYRGVASNDLAERQAGDDVVMFIRTPESRFQLPKDPETPIIMVGPGTGVAPFRGFLQARDVLKREGKTLGEAHLYFGCRNDRDFIYRDELERFEKDGIVTVHTAFSRKEGMPKTYVQHLMADQADTLISILDRGGRLYVCGDGSKMAPDVEAALQKAYQAVHGTGEQEAQNWLRHLQDTGMYAKDVWAGI.

The tract at residues 1-475 (MKETSPIPQP…AEKAAPDEQK (475 aa)) is cytochrome P450. Cys-403 contributes to the heme binding site. Residues 476-1061 (EKTEAKGASV…MYAKDVWAGI (586 aa)) form an NADPH--P450 reductase region. Residues 493–632 (LLVLYGSDTG…QLDEWKKSMW (140 aa)) enclose the Flavodoxin-like domain. Residues 499-504 (SDTGTA), 546-549 (SYNG), 580-582 (CGD), and 588-590 (TYQ) each bind FMN. The FAD-binding FR-type domain maps to 671 to 904 (YEASHASIAE…RTPESRFQLP (234 aa)).

The protein in the N-terminal section; belongs to the cytochrome P450 family. The cofactor is FAD. FMN is required as a cofactor. Requires heme b as cofactor.

The protein resides in the cytoplasm. It catalyses the reaction an organic molecule + reduced [NADPH--hemoprotein reductase] + O2 = an alcohol + oxidized [NADPH--hemoprotein reductase] + H2O + H(+). The enzyme catalyses 2 oxidized [cytochrome P450] + NADPH = 2 reduced [cytochrome P450] + NADP(+) + H(+). Functions as a fatty acid monooxygenase. Catalyzes hydroxylation of a range of long-chain fatty acids, with a preference for long-chain unsaturated and branched-chain fatty acids over saturated fatty acids. Hydroxylation of myristic acid occurs mainly at the omega-2 position. Also displays a NADPH-dependent reductase activity in the C-terminal domain, which allows electron transfer from NADPH to the heme iron of the cytochrome P450 N-terminal domain. Is also able to catalyze efficient oxidation of sodium dodecyl sulfate (SDS). This Bacillus subtilis (strain 168) protein is Bifunctional cytochrome P450/NADPH--P450 reductase 1.